Consider the following 461-residue polypeptide: Pup--protein ligase (461 aa).

Glu9 lines the Mg(2+) pocket. Arg53 lines the ATP pocket. Residue Tyr55 participates in Mg(2+) binding. Asp57 (proton acceptor) is an active-site residue. Position 63 (Glu63) interacts with Mg(2+). Residues Thr66 and Trp420 each contribute to the ATP site.

This sequence belongs to the Pup ligase/Pup deamidase family. Pup-conjugating enzyme subfamily.

The enzyme catalyses ATP + [prokaryotic ubiquitin-like protein]-L-glutamate + [protein]-L-lysine = ADP + phosphate + N(6)-([prokaryotic ubiquitin-like protein]-gamma-L-glutamyl)-[protein]-L-lysine.. The protein operates within protein degradation; proteasomal Pup-dependent pathway. It participates in protein modification; protein pupylation. Catalyzes the covalent attachment of the prokaryotic ubiquitin-like protein modifier Pup to the proteasomal substrate proteins, thereby targeting them for proteasomal degradation. This tagging system is termed pupylation. The ligation reaction involves the side-chain carboxylate of the C-terminal glutamate of Pup and the side-chain amino group of a substrate lysine. The sequence is that of Pup--protein ligase from Renibacterium salmoninarum (strain ATCC 33209 / DSM 20767 / JCM 11484 / NBRC 15589 / NCIMB 2235).